The following is a 445-amino-acid chain: Ubiquitin carboxyl-terminal hydrolase MINDY-3 (445 aa).

The Nucleophile role is filled by cysteine 51. At serine 125 the chain carries Phosphoserine. Histidine 287 functions as the Proton acceptor in the catalytic mechanism.

This sequence belongs to the MINDY deubiquitinase family. FAM188 subfamily. Interacts with COPS5.

Its subcellular location is the nucleus. The enzyme catalyses Thiol-dependent hydrolysis of ester, thioester, amide, peptide and isopeptide bonds formed by the C-terminal Gly of ubiquitin (a 76-residue protein attached to proteins as an intracellular targeting signal).. In terms of biological role, hydrolase that can remove 'Lys-48'-linked conjugated ubiquitin from proteins. This chain is Ubiquitin carboxyl-terminal hydrolase MINDY-3 (MINDY3), found in Bos taurus (Bovine).